An 85-amino-acid chain; its full sequence is CDC42 small effector protein 2 (85 aa).

S-palmitoyl cysteine attachment occurs at residues Cys-10 and Cys-11. In terms of domain architecture, CRIB spans 29-42 (IGEPTNFVHTAHVG).

The protein belongs to the CDC42SE/SPEC family.

Its subcellular location is the cytoplasm. The protein resides in the cytoskeleton. It is found in the cell membrane. Probably involved in the organization of the actin cytoskeleton by acting downstream of CDC42, inducing actin filament assembly. This is CDC42 small effector protein 2 (cdc42se2) from Danio rerio (Zebrafish).